We begin with the raw amino-acid sequence, 112 residues long: Ig kappa chain V-III region TEPC 124 (112 aa).

A framework-1 region spans residues aspartate 1 to cysteine 23. A disulfide bridge links cysteine 23 with cysteine 92. Residues arginine 24–residue 38 form a complementarity-determining-1 region. The segment at tryptophan 39–tyrosine 53 is framework-2. Positions arginine 54–serine 60 are complementarity-determining-2. The framework-3 stretch occupies residues glycine 61–cysteine 92. The interval residue 93–threonine 101 is complementarity-determining-3. Residues phenylalanine 102 to lysine 111 are framework-4.

This Mus musculus (Mouse) protein is Ig kappa chain V-III region TEPC 124.